Reading from the N-terminus, the 356-residue chain is Probable arabinogalactan endo-beta-1,4-galactanase A (356 aa).

The signal sequence occupies residues 1–21 (MLGKMILLPLFVLLCHSLASA). N-linked (GlcNAc...) asparagine glycosylation is present at asparagine 133. Glutamate 157 (proton donor) is an active-site residue. Glutamate 268 acts as the Nucleophile in catalysis.

This sequence belongs to the glycosyl hydrolase 53 family.

The protein localises to the secreted. The enzyme catalyses The enzyme specifically hydrolyzes (1-&gt;4)-beta-D-galactosidic linkages in type I arabinogalactans.. In terms of biological role, endogalactanase involved in the degradation of plant cell wall polysaccharides, and more particularly of hairy regions of pectin. The polypeptide is Probable arabinogalactan endo-beta-1,4-galactanase A (galA) (Neosartorya fischeri (strain ATCC 1020 / DSM 3700 / CBS 544.65 / FGSC A1164 / JCM 1740 / NRRL 181 / WB 181) (Aspergillus fischerianus)).